The chain runs to 147 residues: Hemoglobin subunit beta-1 (147 aa).

At Val-2 the chain carries N-acetylvaline. A Globin domain is found at 3-147 (HLTDAEKAAV…VASALAHKYH (145 aa)). An N6-succinyllysine modification is found at Lys-18. Phosphoserine is present on residues Ser-45, Ser-51, and Ser-53. Position 60 is an N6-succinyllysine (Lys-60). Positions 64 and 93 each coordinate heme b. An Asymmetric dimethylarginine modification is found at Arg-105. Thr-124 is subject to Phosphothreonine.

It belongs to the globin family. As to quaternary structure, heterotetramer of two alpha chains and two beta chains. As to expression, red blood cells.

Involved in oxygen transport from the lung to the various peripheral tissues. The protein is Hemoglobin subunit beta-1 (Hbb) of Rattus norvegicus (Rat).